A 512-amino-acid polypeptide reads, in one-letter code: 2'-5'-oligoadenylate synthase-like protein 1 (512 aa).

Ubiquitin-like domains are found at residues 351 to 430 and 431 to 507; these read IQVT…ISPE and IQVF…EGKA.

It belongs to the 2-5A synthase family. As to quaternary structure, specifically interacts with the ligand binding domain of the thyroid receptor (TR). TRIP14 does not require the presence of thyroid hormone for its interaction. Binds MBD1.

The protein localises to the nucleus. It localises to the nucleolus. It is found in the cytoplasm. In terms of biological role, does not have 2'-5'-OAS activity, but can bind double-stranded RNA. Displays antiviral activity via an alternative antiviral pathway independent of RNase L. This chain is 2'-5'-oligoadenylate synthase-like protein 1 (Oasl), found in Rattus norvegicus (Rat).